Reading from the N-terminus, the 752-residue chain is Probable GTP-binding protein OBGC1, chloroplastic (752 aa).

The transit peptide at M1–R90 directs the protein to the chloroplast. The segment at F19–R121 is disordered. A compositionally biased stretch (basic residues) spans N26–S36. Residues G103–E117 are compositionally biased toward acidic residues. The region spanning M294 to V452 is the Obg domain. The OBG-type G domain occupies A453–Q621. GTP contacts are provided by residues G459–S466, F484–L488, D506–G509, N573–D576, and S602–M604. 2 residues coordinate Mg(2+): S466 and T486. One can recognise an OCT domain in the interval E649–D728. The tract at residues D728–G752 is disordered. The segment covering N740–G752 has biased composition (basic and acidic residues).

The protein belongs to the TRAFAC class OBG-HflX-like GTPase superfamily. OBG GTPase family. Mg(2+) serves as cofactor.

The protein localises to the plastid. It is found in the chloroplast. Its function is as follows. Probable GTP-binding protein that may play a role in chloroplast development. This Oryza sativa subsp. indica (Rice) protein is Probable GTP-binding protein OBGC1, chloroplastic (OBGC1).